The primary structure comprises 323 residues: Transmembrane protein 59 (323 aa).

Positions 1–35 (MAAPKGSLWVRTQLGLPPLLLLTMALAGGSGTASA) are cleaved as a signal peptide. At 36–238 (EAFDSVLGDT…GFLRCLSLNS (203 aa)) the chain is on the extracellular side. Asparagine 90 carries N-linked (GlcNAc...) asparagine glycosylation. A helical transmembrane segment spans residues 239-259 (GWILTTTLVLSVMVLLWICCA). Residues 260 to 323 (TVATAVEQYV…TKVNLAHSEI (64 aa)) lie on the Cytoplasmic side of the membrane. The ATG16L1-binding motif motif lies at 263 to 281 (TAVEQYVPSEKLSIYGDLE). Threonine 303 carries the phosphothreonine modification.

This sequence belongs to the TMEM59 family. As to quaternary structure, interacts with ATG16L1 (via WD repeats). In terms of processing, N-glycosylated.

The protein resides in the late endosome membrane. The protein localises to the lysosome membrane. It is found in the cell membrane. It localises to the golgi apparatus membrane. Functionally, acts as a regulator of autophagy in response to S.aureus infection by promoting activation of LC3 (MAP1LC3A, MAP1LC3B or MAP1LC3C). Acts by interacting with ATG16L1, leading to promote a functional complex between LC3 and ATG16L1 and promoting LC3 lipidation and subsequent activation of autophagy. Modulates the O-glycosylation and complex N-glycosylation steps occurring during the Golgi maturation of several proteins such as APP, BACE1, SEAP or PRNP. Inhibits APP transport to the cell surface and further shedding. This Homo sapiens (Human) protein is Transmembrane protein 59 (TMEM59).